The following is a 294-amino-acid chain: UDP-3-O-acyl-N-acetylglucosamine deacetylase (294 aa).

Residues His75, His232, and Asp236 each contribute to the Zn(2+) site. The Proton donor role is filled by His259.

Belongs to the LpxC family. It depends on Zn(2+) as a cofactor.

It carries out the reaction a UDP-3-O-[(3R)-3-hydroxyacyl]-N-acetyl-alpha-D-glucosamine + H2O = a UDP-3-O-[(3R)-3-hydroxyacyl]-alpha-D-glucosamine + acetate. It participates in glycolipid biosynthesis; lipid IV(A) biosynthesis; lipid IV(A) from (3R)-3-hydroxytetradecanoyl-[acyl-carrier-protein] and UDP-N-acetyl-alpha-D-glucosamine: step 2/6. In terms of biological role, catalyzes the hydrolysis of UDP-3-O-myristoyl-N-acetylglucosamine to form UDP-3-O-myristoylglucosamine and acetate, the committed step in lipid A biosynthesis. The protein is UDP-3-O-acyl-N-acetylglucosamine deacetylase of Campylobacter jejuni subsp. jejuni serotype O:23/36 (strain 81-176).